We begin with the raw amino-acid sequence, 1574 residues long: MSEARRGIFPFSKIKLMLASPEDIRSWSHGEVKRPETLNYRTLKPEKDGLFCAKIFGPIKDYECLCGKYRGKRYEGKICEKCGVEVTTSYVRRQRFGHIELAAPVVHIWFLKSTPSKIGTLLNLTSRDVERVAYFESYLVIEYPNEEEEEKFEKDEHTIPLNDGISTKWVKLHVVNEEEFEEKYAFTIDEKYEHGMGAEILKEVLSKLDLDAYSRKLKEIVKPYSIGFEDLGKEIEQKYKNLYQKLIKVIADDFRAYGVEIKGLEDHGLSLEQAIHRILNEELYLNVETGEISLEDCGDSCLTGRDALKEYYERVREHKKDIPIFEKIKEDIRSTVLREISEARIRKALRTLQLVEGFKKSGNRPEWMILEVLPVLPPELRPLVALDGGRFATSDLNDFYRRVINRNNRLKRLIELNAPDIIIRNEKRMLQEAVDALIDNGKRGNPVKQNGRPLKSLADYLKGKQGRFRQNLLGKRVDYSGRSVIVVGPELQMHQCGLPKIMALELFKPFVYRRLEEKGYATSIKHAKRLVEQKTPEVWECLEEVVKEHPVLLNRAPTLHRPSIQAFEPVLVEGKAIQLHPLVCPPFNADFDGDQMAVHVPLGIEAQLESYILMLSTQNVLSPAHGKPLTMPSQDMVLGTYYITHDPIPGRKGEGKAFGTFEEVLKALELGHVDIHAKIKVKVGNEWIETTPGRVLFNSIMPEGQPFVNKTLDKKGLSKLITELYIRVGNEETVKFLDRVKELGFLRSTLAGISIGVEDLQVPKAKKKIIEEALKKTEEIWNQYVQGIITNKERYNRIIDVWSEATNLVSKAMFEEIEKSKRIENGKEYPGTFNPIYMMAISGARGNRDQIRQLAGMRGLMAKHSGEFIETPIISNFREGLSVLEYFISTYGARKGLADTALKTAFAGYLTRRLVDVAQDITITERDCGTVKGFEMEPIVEAGEERVPLKDRIFGRVLAEDVKDPYTGEIIARRNEVIDEKLAEKITKAGIEKVRVRSPLTCEAKHGVCAMCYGWDLSQRKIVSVGEAVGIIAAQSIGEPGTQLTMRTFHIGGAATAQKVQSFVKAESDGKVKFYNVKLIVNRKGEKINISKDAAIGIVDEEGRLLERHTIPYGARILVEEGQEVKAETKLADWDPFNTYIIAEVGGKVELRDIILDVTVREERDPITGKTASVISFMRPRDAMLHTPRIAVITEDGKEYIYDLPVNAILNIPPEKISLEWRVCPTCSESEETTIQHQYYVVKDLEVQPGDILARIPKETAKVRDIVGGLPRVEELFEARKPKNPAILSEIDGYVKIYEDADEVIIFNPRTGETAKYSIKKDELILVRHGQFVKKGQKITETKVAEIDGQVRIKGRGFKVIVYNPETGLQREYFVPKGKFLLVKEGDFVKAGDQLTDGTPVPEEILRIKGIEELEKFLLKEVQMVYKLQGVDINDKHFEIIIKQMLKKVRIIDPGDSRFLVGEEVDKEELEEEIQRIKLEGGKLPKAEPVLVGITRAALSTRSWISAASFQETTRVLTDASVEGKIDELRGLKENVIIGNIIPAGTGVDEYREVDVIPAEEKVLEEKKEPKEGS.

Residues Cys-64, Cys-66, Cys-79, and Cys-82 each contribute to the Zn(2+) site. Residues Asp-590, Asp-592, and Asp-594 each contribute to the Mg(2+) site. Cys-928, Cys-1002, Cys-1009, and Cys-1012 together coordinate Zn(2+).

This sequence belongs to the RNA polymerase beta' chain family. As to quaternary structure, the RNAP catalytic core consists of 2 alpha, 1 beta, 1 beta' and 1 omega subunit. When a sigma factor is associated with the core the holoenzyme is formed, which can initiate transcription. Mg(2+) is required as a cofactor. It depends on Zn(2+) as a cofactor.

It carries out the reaction RNA(n) + a ribonucleoside 5'-triphosphate = RNA(n+1) + diphosphate. DNA-dependent RNA polymerase catalyzes the transcription of DNA into RNA using the four ribonucleoside triphosphates as substrates. In Aquifex aeolicus (strain VF5), this protein is DNA-directed RNA polymerase subunit beta'.